Reading from the N-terminus, the 590-residue chain is Arginine--tRNA ligase, cytoplasmic (590 aa).

Position 2 is an N-acetylalanine (Ala-2). Residues 137 to 139 (SPN), His-148, Tyr-322, Asp-326, and Gln-350 each bind L-arginine. A 'HIGH' region motif is present at residues 138-149 (PNIAKEMHVGHL). The interval 470–484 (DTAVYLLYAHARICS) is interaction with tRNA.

The protein belongs to the class-I aminoacyl-tRNA synthetase family.

Its subcellular location is the cytoplasm. It localises to the cytosol. It catalyses the reaction tRNA(Arg) + L-arginine + ATP = L-arginyl-tRNA(Arg) + AMP + diphosphate. In terms of biological role, forms part of a macromolecular complex that catalyzes the attachment of specific amino acids to cognate tRNAs during protein synthesis. The sequence is that of Arginine--tRNA ligase, cytoplasmic from Arabidopsis thaliana (Mouse-ear cress).